The chain runs to 452 residues: NADH-ubiquinone oxidoreductase chain 4 (452 aa).

14 helical membrane passes run 4–24 (LVLG…SMVW), 29–49 (VGSV…MTIS), 59–79 (FVSL…LLAS), 88–110 (LIYQ…LAFM), 114–136 (LLLF…TRWG), 144–164 (AGTY…ICLI), 182–202 (VFQL…AFLV), 221–241 (PIAG…YGMM), 252–272 (MLSS…MGGI), 282–304 (LIAY…GVAW), 309–331 (AMVL…NLWY), 345–365 (LIMI…MNMA), 390–410 (IVYM…LFGM), and 432–452 (LLTT…GLMF).

Belongs to the complex I subunit 4 family.

It is found in the mitochondrion membrane. The enzyme catalyses a ubiquinone + NADH + 5 H(+)(in) = a ubiquinol + NAD(+) + 4 H(+)(out). Functionally, core subunit of the mitochondrial membrane respiratory chain NADH dehydrogenase (Complex I) that is believed to belong to the minimal assembly required for catalysis. Complex I functions in the transfer of electrons from NADH to the respiratory chain. The immediate electron acceptor for the enzyme is believed to be ubiquinone. This Branchiostoma lanceolatum (Common lancelet) protein is NADH-ubiquinone oxidoreductase chain 4 (ND4).